Here is a 143-residue protein sequence, read N- to C-terminus: Heat shock protein Hsp-16.41 (143 aa).

Residues His35–Val140 enclose the sHSP domain.

The protein belongs to the small heat shock protein (HSP20) family.

The sequence is that of Heat shock protein Hsp-16.41 (hsp-16.41) from Caenorhabditis elegans.